Consider the following 56-residue polypeptide: Large ribosomal subunit protein bL33 (56 aa).

It belongs to the bacterial ribosomal protein bL33 family.

The chain is Large ribosomal subunit protein bL33 from Delftia acidovorans (strain DSM 14801 / SPH-1).